The chain runs to 908 residues: Translation initiation factor IF-2 (908 aa).

The tract at residues 145 to 312 (EIPGLTQRAK…KGKKRQAEKI (168 aa)) is disordered. The segment covering 167–177 (VVERPEARPSA) has biased composition (basic and acidic residues). 2 stretches are compositionally biased toward low complexity: residues 194 to 217 (RPEG…PRPG) and 263 to 276 (VAGA…GAAV). The segment covering 278–296 (KRKEEFKKTELFEKHERVF) has biased composition (basic and acidic residues). The region spanning 408–577 (KRPPVVTIMG…LLQADVLELK (170 aa)) is the tr-type G domain. Positions 417-424 (GHVDHGKT) are G1. Residue 417 to 424 (GHVDHGKT) participates in GTP binding. Residues 442–446 (GITQH) are G2. The tract at residues 463–466 (DTPG) is G3. GTP contacts are provided by residues 463–467 (DTPGH) and 517–520 (NKID). The segment at 517 to 520 (NKID) is G4. A G5 region spans residues 553–555 (SAK).

It belongs to the TRAFAC class translation factor GTPase superfamily. Classic translation factor GTPase family. IF-2 subfamily.

Its subcellular location is the cytoplasm. In terms of biological role, one of the essential components for the initiation of protein synthesis. Protects formylmethionyl-tRNA from spontaneous hydrolysis and promotes its binding to the 30S ribosomal subunits. Also involved in the hydrolysis of GTP during the formation of the 70S ribosomal complex. The sequence is that of Translation initiation factor IF-2 from Geotalea daltonii (strain DSM 22248 / JCM 15807 / FRC-32) (Geobacter daltonii).